A 383-amino-acid chain; its full sequence is NADH-quinone oxidoreductase subunit D 1 (383 aa).

It belongs to the complex I 49 kDa subunit family. As to quaternary structure, NDH-1 is composed of 14 different subunits. Subunits NuoB, C, D, E, F, and G constitute the peripheral sector of the complex.

It is found in the cell membrane. The enzyme catalyses a quinone + NADH + 5 H(+)(in) = a quinol + NAD(+) + 4 H(+)(out). Functionally, NDH-1 shuttles electrons from NADH, via FMN and iron-sulfur (Fe-S) centers, to quinones in the respiratory chain. The immediate electron acceptor for the enzyme in this species is believed to be a menaquinone. Couples the redox reaction to proton translocation (for every two electrons transferred, four hydrogen ions are translocated across the cytoplasmic membrane), and thus conserves the redox energy in a proton gradient. The chain is NADH-quinone oxidoreductase subunit D 1 from Streptomyces coelicolor (strain ATCC BAA-471 / A3(2) / M145).